Consider the following 239-residue polypeptide: MAGHSKWANIQHRKGRQDEKRGKIWTKLIKEITVAAKMGGGDLTANPRLRLAIDKAKDANMPNDNVQRAIQRGTGSLEGVNYEEIRYEGYGMNGAAIIVDCLTDNRTRTVAEVRHAFNKNGGNMGTEGSVAFLFKHCGQMLFAPGTSEDQLMEVALDAGAEDVITHDDGSLEVLTPVPDFSKVQDAISQAGLKAELATVAMRPETEIALEGDQAESMQKLLDALENLDDVQEVFTNAAL.

Residues 1-21 form a disordered region; it reads MAGHSKWANIQHRKGRQDEKR.

It belongs to the TACO1 family.

The protein localises to the cytoplasm. The polypeptide is Probable transcriptional regulatory protein Pnuc_0618 (Polynucleobacter asymbioticus (strain DSM 18221 / CIP 109841 / QLW-P1DMWA-1) (Polynucleobacter necessarius subsp. asymbioticus)).